Here is a 321-residue protein sequence, read N- to C-terminus: Probable pectate lyase A (321 aa).

The first 18 residues, methionine 1–alanine 18, serve as a signal peptide directing secretion. Residue asparagine 93 is glycosylated (N-linked (GlcNAc...) asparagine). Ca(2+)-binding residues include aspartate 134, aspartate 163, and aspartate 167. Arginine 220 is a catalytic residue. Asparagine 238 carries an N-linked (GlcNAc...) asparagine glycan.

Belongs to the polysaccharide lyase 1 family. Ca(2+) serves as cofactor.

The protein resides in the secreted. It carries out the reaction Eliminative cleavage of (1-&gt;4)-alpha-D-galacturonan to give oligosaccharides with 4-deoxy-alpha-D-galact-4-enuronosyl groups at their non-reducing ends.. Pectinolytic enzyme consist of four classes of enzymes: pectin lyase, polygalacturonase, pectin methylesterase and rhamnogalacturonase. Among pectinolytic enzymes, pectin lyase is the most important in depolymerization of pectin, since it cleaves internal glycosidic bonds of highly methylated pectins. Favors pectate, the anion, over pectin, the methyl ester. The chain is Probable pectate lyase A (plyA) from Aspergillus fumigatus (strain CBS 144.89 / FGSC A1163 / CEA10) (Neosartorya fumigata).